A 201-amino-acid chain; its full sequence is Holliday junction branch migration complex subunit RuvA (201 aa).

The tract at residues 1 to 63 (MYDYIKGTVT…EDNISLFGFQ (63 aa)) is domain I. The segment at 64–142 (TTEERYLFKK…DVVASEIVYV (79 aa)) is domain II. A flexible linker region spans residues 143-153 (APENDMVAGLS). Residues 153-201 (SPQLEEAVLALEALGYSTRELKKVIPKLAKEADLTSDAYIKLALQLMTK) are domain III.

Belongs to the RuvA family. In terms of assembly, homotetramer. Forms an RuvA(8)-RuvB(12)-Holliday junction (HJ) complex. HJ DNA is sandwiched between 2 RuvA tetramers; dsDNA enters through RuvA and exits via RuvB. An RuvB hexamer assembles on each DNA strand where it exits the tetramer. Each RuvB hexamer is contacted by two RuvA subunits (via domain III) on 2 adjacent RuvB subunits; this complex drives branch migration. In the full resolvosome a probable DNA-RuvA(4)-RuvB(12)-RuvC(2) complex forms which resolves the HJ.

It is found in the cytoplasm. In terms of biological role, the RuvA-RuvB-RuvC complex processes Holliday junction (HJ) DNA during genetic recombination and DNA repair, while the RuvA-RuvB complex plays an important role in the rescue of blocked DNA replication forks via replication fork reversal (RFR). RuvA specifically binds to HJ cruciform DNA, conferring on it an open structure. The RuvB hexamer acts as an ATP-dependent pump, pulling dsDNA into and through the RuvAB complex. HJ branch migration allows RuvC to scan DNA until it finds its consensus sequence, where it cleaves and resolves the cruciform DNA. This is Holliday junction branch migration complex subunit RuvA from Listeria monocytogenes serovar 1/2a (strain ATCC BAA-679 / EGD-e).